The primary structure comprises 960 residues: MSRLIVKNLPNGMKEERFRQLFAAFGTLTDCSLKFTKDGKFRKFGFIGFKSEEEAQKAQKHFNKSFIDTSRITVEFCKSFGDPAKPRAWSKHAQKPSQPKQPPKDSTTPEIKKDEKKKKVAGQLEKLKEDTEFQEFLSVHQRRAQAATWANDGLDAEPSKGKSKPASDYLNFDSDSGQESEEEGAGEDLEEEASLEPKAAVQKELSDMDYLKSKMVKAGSSSSSEEEESEDEAVHCDEGSEAEEEDSSATPVLQERDSKGAGQEQGMPAGKKRPPEARAETEKPANQKEPTTCHTVKLRGAPFNVTEKNVMEFLAPLKPVAIRIVRNAHGNKTGYIFVDFSNEEEVKQALKCNREYMGGRYIEVFREKNVPTTKGAPKNTTKSWQGRILGENEEEEDLAESGRLFVRNLPYTSTEEDLEKLFSKYGPLSELHYPIDSLTKKPKGFAFITFMFPEHAVKAYSEVDGQVFQGRMLHVLPSTIKKEASEDASALGSSSYKKKKEAQDKANSASSHNWNTLFMGPNAVADAIAQKYNATKSQVFDHETKGSVAVRVALGETQLVQEVRRFLIDNGVSLDSFSQAAAERSKTVILVKNLPAGTLAAQLQETFGHFGSLGRVLLPEGGITAIVEFLEPLEARKAFRHLAYSKFHHVPLYLEWAPVGVFSSTAPQKKKLQDTPSEPMEKDPAEPETVPDGETPEDENPTEEGADNSSAKMEEEEEEEEEEEESLPGCTLFIKNLNFDTTEEKLKEVFSKVGTVKSCSISKKKNKAGVLLSMGFGFVEYRKPEQAQKALKQLQGHVVDGHKLEVRISERATKPAVTLARKKQVPRKQTTSKILVRNIPFQAHSREIRELFSTFGELKTVRLPKKMTGTGTHRGFGFVDFLTKQDAKRAFNALCHSTHLYGRRLVLEWADSEVTLQALRRKTAAHFHEPPKKKRSVVLDEILEQLEGSDSDSEEQTLQL.

An RRM 1 domain is found at Ser-2–Ser-79. Disordered regions lie at residues Lys-85–Lys-119 and Trp-149–His-294. Ser-174, Ser-176, and Ser-180 each carry phosphoserine. Over residues Ser-176–Ser-194 the composition is skewed to acidic residues. Residues Arg-273 to Asn-286 show a composition bias toward basic and acidic residues. 2 consecutive RRM domains span residues His-294–Asn-369 and Gly-402–Ile-480. Residue Lys-481 forms a Glycyl lysine isopeptide (Lys-Gly) (interchain with G-Cter in SUMO2) linkage. The tract at residues Leu-491–Asn-513 is disordered. The RRM 4 domain occupies Thr-587–Val-659. Positions Pro-667–Gly-729 are disordered. 2 stretches are compositionally biased toward acidic residues: residues Thr-689–Ala-706 and Glu-714–Ser-726. 2 consecutive RRM domains span residues Cys-730 to Arg-811 and Ser-832 to Ser-912. Ser-936, Ser-949, and Ser-951 each carry phosphoserine.

This sequence belongs to the RRM MRD1 family. Expressed in the crypts of Lieberkuhn of the intestine and in intestinal neoplasia (at protein level).

Its subcellular location is the nucleus. It localises to the nucleolus. The protein localises to the nucleoplasm. It is found in the cytoplasm. The protein resides in the chromosome. Functionally, plays a role in embryo pre-implantation development. The protein is Probable RNA-binding protein 19 (RBM19) of Homo sapiens (Human).